A 289-amino-acid polypeptide reads, in one-letter code: Transcriptional regulator Rob (289 aa).

The 99-residue stretch at Arg-8–Ser-106 folds into the HTH araC/xylS-type domain. 2 DNA-binding regions (H-T-H motif) span residues Asp-25–Thr-46 and Ile-73–Phe-96.

Its function is as follows. Transcriptional regulator. Represses transcription of genes belonging to the flagellar regulon, including flhD, flhB and fliC; probably thereby leading to repression of motility. Binds to regulatory regions of target genes, including the promoters of the flhDC operon and of P-type ATPase mgtA. Involved in post-transcriptional regulation of expression. Represses expression of the flhDC operon in a post-transcriptional manner. Binds to the right arm of the replication origin oriC of the chromosome. Rob binding may influence the formation of the nucleoprotein structure, required for oriC function in the initiation of replication. This is Transcriptional regulator Rob from Salmonella typhimurium (strain LT2 / SGSC1412 / ATCC 700720).